The following is a 155-amino-acid chain: Cytochrome c-type biogenesis protein CcmE (155 aa).

Topologically, residues 1-8 (MHPKRKQR) are cytoplasmic. The helical; Signal-anchor for type II membrane protein transmembrane segment at 9 to 29 (LILVLFVVLVSSVGVSLTLYA) threads the bilayer. The Periplasmic segment spans residues 30 to 155 (LNENINLFYP…KTCKGISYDS (126 aa)). Heme-binding residues include H124 and Y128.

The protein belongs to the CcmE/CycJ family.

It localises to the cell inner membrane. Functionally, heme chaperone required for the biogenesis of c-type cytochromes. Transiently binds heme delivered by CcmC and transfers the heme to apo-cytochromes in a process facilitated by CcmF and CcmH. This is Cytochrome c-type biogenesis protein CcmE from Teredinibacter turnerae (strain ATCC 39867 / T7901).